Reading from the N-terminus, the 391-residue chain is GTPase Obg (391 aa).

The Obg domain occupies methionine 1–leucine 159. In terms of domain architecture, OBG-type G spans alanine 160–glutamate 333. GTP contacts are provided by residues glycine 166–serine 173, phenylalanine 191–valine 195, aspartate 213–glycine 216, asparagine 283–aspartate 286, and serine 314–alanine 316. Serine 173 and threonine 193 together coordinate Mg(2+).

It belongs to the TRAFAC class OBG-HflX-like GTPase superfamily. OBG GTPase family. In terms of assembly, monomer. It depends on Mg(2+) as a cofactor.

Its subcellular location is the cytoplasm. Functionally, an essential GTPase which binds GTP, GDP and possibly (p)ppGpp with moderate affinity, with high nucleotide exchange rates and a fairly low GTP hydrolysis rate. Plays a role in control of the cell cycle, stress response, ribosome biogenesis and in those bacteria that undergo differentiation, in morphogenesis control. The protein is GTPase Obg of Actinobacillus pleuropneumoniae serotype 7 (strain AP76).